Consider the following 284-residue polypeptide: Tryptophan synthase alpha chain (284 aa).

Residues E55 and D66 each act as proton acceptor in the active site.

This sequence belongs to the TrpA family. In terms of assembly, tetramer of two alpha and two beta chains.

The enzyme catalyses (1S,2R)-1-C-(indol-3-yl)glycerol 3-phosphate + L-serine = D-glyceraldehyde 3-phosphate + L-tryptophan + H2O. It functions in the pathway amino-acid biosynthesis; L-tryptophan biosynthesis; L-tryptophan from chorismate: step 5/5. Functionally, the alpha subunit is responsible for the aldol cleavage of indoleglycerol phosphate to indole and glyceraldehyde 3-phosphate. The sequence is that of Tryptophan synthase alpha chain from Methanococcus voltae.